Here is a 169-residue protein sequence, read N- to C-terminus: Putative phosphoesterase SE_0715 (169 aa).

His-34 acts as the Proton donor in catalysis. 2 consecutive short sequence motifs (HXTX) follow at residues His-34–Ile-37 and His-115–Ile-118. His-115 functions as the Proton acceptor in the catalytic mechanism.

Belongs to the 2H phosphoesterase superfamily. YjcG family.

This is Putative phosphoesterase SE_0715 from Staphylococcus epidermidis (strain ATCC 12228 / FDA PCI 1200).